The following is a 121-amino-acid chain: Copper transport protein CCH (121 aa).

The residue at position 2 (A2) is an N-acetylalanine. Residues 2–65 (AQTVVLKVGM…TVSKTGKKTS (64 aa)) form the HMA domain. Residues C13 and C16 each coordinate Cu cation. The disordered stretch occupies residues 70–121 (EAEAEPKAEADPKVETVTETKTEAETKTEAKVDAKADVEPKAAEAETKPSQV). A compositionally biased stretch (basic and acidic residues) spans 73-121 (AEPKAEADPKVETVTETKTEAETKTEAKVDAKADVEPKAAEAETKPSQV).

It belongs to the ATX1 family. Cu cation serves as cofactor. Expressed in phloem (at protein level).

In terms of biological role, involved in copper homeostasis. Can complement the yeast mutants atx1 and sod1. The chain is Copper transport protein CCH (CCH) from Arabidopsis thaliana (Mouse-ear cress).